We begin with the raw amino-acid sequence, 374 residues long: LRR repeats and ubiquitin-like domain-containing protein At2g30105 (374 aa).

The Ubiquitin-like domain maps to 13 to 87; the sequence is IKLTVKFGGK…LMLMASQGLH (75 aa). LRR repeat units follow at residues 128-151, 152-175, 177-200, 201-224, 225-248, 250-270, 272-293, 294-316, and 318-340; these read WKAT…VWDC, GSGV…ISSF, SMQK…GIAS, LKRL…MGSL, TSLR…GLLT, LEIL…IGNC, FLME…FTKL, RNLK…LFKM, and LQLS…QFEG.

The sequence is that of LRR repeats and ubiquitin-like domain-containing protein At2g30105 from Arabidopsis thaliana (Mouse-ear cress).